The following is a 284-amino-acid chain: D-tagatose-1,6-bisphosphate aldolase subunit GatY (284 aa).

Asp-82 serves as the catalytic Proton donor. Positions 83 and 180 each coordinate Zn(2+). Gly-181 provides a ligand contact to dihydroxyacetone phosphate. Residue His-208 participates in Zn(2+) binding. Residues 209-211 (GAS) and 230-233 (NVAT) each bind dihydroxyacetone phosphate.

Belongs to the class II fructose-bisphosphate aldolase family. TagBP aldolase GatY subfamily. Forms a complex with GatZ. The cofactor is Zn(2+).

It catalyses the reaction D-tagatofuranose 1,6-bisphosphate = D-glyceraldehyde 3-phosphate + dihydroxyacetone phosphate. The protein operates within carbohydrate metabolism; D-tagatose 6-phosphate degradation; D-glyceraldehyde 3-phosphate and glycerone phosphate from D-tagatose 6-phosphate: step 2/2. Catalytic subunit of the tagatose-1,6-bisphosphate aldolase GatYZ, which catalyzes the reversible aldol condensation of dihydroxyacetone phosphate (DHAP or glycerone-phosphate) with glyceraldehyde 3-phosphate (G3P) to produce tagatose 1,6-bisphosphate (TBP). Requires GatZ subunit for full activity and stability. Is involved in the catabolism of galactitol. In Shigella flexneri serotype 5b (strain 8401), this protein is D-tagatose-1,6-bisphosphate aldolase subunit GatY.